The primary structure comprises 625 residues: DNA-directed RNA polymerase subunit gamma (625 aa).

Residues Cys-71, Cys-73, Cys-86, and Cys-89 each contribute to the Zn(2+) site. The Mg(2+) site is built by Asp-467, Asp-469, and Asp-471.

Belongs to the RNA polymerase beta' chain family. RpoC1 subfamily. As to quaternary structure, in cyanobacteria the RNAP catalytic core is composed of 2 alpha, 1 beta, 1 beta', 1 gamma and 1 omega subunit. When a sigma factor is associated with the core the holoenzyme is formed, which can initiate transcription. It depends on Mg(2+) as a cofactor. Zn(2+) serves as cofactor.

It catalyses the reaction RNA(n) + a ribonucleoside 5'-triphosphate = RNA(n+1) + diphosphate. Its function is as follows. DNA-dependent RNA polymerase catalyzes the transcription of DNA into RNA using the four ribonucleoside triphosphates as substrates. In Rippkaea orientalis (strain PCC 8801 / RF-1) (Cyanothece sp. (strain PCC 8801)), this protein is DNA-directed RNA polymerase subunit gamma.